Reading from the N-terminus, the 367-residue chain is Peptide chain release factor 2 (367 aa).

N5-methylglutamine is present on Gln249.

It belongs to the prokaryotic/mitochondrial release factor family. Methylated by PrmC. Methylation increases the termination efficiency of RF2.

The protein resides in the cytoplasm. Peptide chain release factor 2 directs the termination of translation in response to the peptide chain termination codons UGA and UAA. The polypeptide is Peptide chain release factor 2 (Thermotoga petrophila (strain ATCC BAA-488 / DSM 13995 / JCM 10881 / RKU-1)).